Here is a 344-residue protein sequence, read N- to C-terminus: Aspartate-semialdehyde dehydrogenase (344 aa).

NADP(+) contacts are provided by residues 10-13 (TGQV) and 38-39 (RS). Arginine 101 is a phosphate binding site. Cysteine 131 acts as the Acyl-thioester intermediate in catalysis. Residue glutamine 158 coordinates substrate. 161-162 (SG) serves as a coordination point for NADP(+). Lysine 228 contributes to the phosphate binding site. Residue arginine 250 coordinates substrate. Histidine 257 functions as the Proton acceptor in the catalytic mechanism. Asparagine 326 is an NADP(+) binding site.

This sequence belongs to the aspartate-semialdehyde dehydrogenase family. As to quaternary structure, homodimer.

It catalyses the reaction L-aspartate 4-semialdehyde + phosphate + NADP(+) = 4-phospho-L-aspartate + NADPH + H(+). The protein operates within amino-acid biosynthesis; L-lysine biosynthesis via DAP pathway; (S)-tetrahydrodipicolinate from L-aspartate: step 2/4. Its pathway is amino-acid biosynthesis; L-methionine biosynthesis via de novo pathway; L-homoserine from L-aspartate: step 2/3. It functions in the pathway amino-acid biosynthesis; L-threonine biosynthesis; L-threonine from L-aspartate: step 2/5. Its function is as follows. Catalyzes the NADPH-dependent formation of L-aspartate-semialdehyde (L-ASA) by the reductive dephosphorylation of L-aspartyl-4-phosphate. The protein is Aspartate-semialdehyde dehydrogenase of Corynebacterium melassecola.